The primary structure comprises 309 residues: DNA-directed RNA polymerase subunit alpha (309 aa).

The segment at 1–225 (MFQVQCLESA…SLFKLVNSAD (225 aa)) is alpha N-terminal domain (alpha-NTD). The interval 237 to 309 (IVQVSQTDVT…LHERFNLTLN (73 aa)) is alpha C-terminal domain (alpha-CTD).

This sequence belongs to the RNA polymerase alpha chain family. As to quaternary structure, in plastids the minimal PEP RNA polymerase catalytic core is composed of four subunits: alpha, beta, beta', and beta''. When a (nuclear-encoded) sigma factor is associated with the core the holoenzyme is formed, which can initiate transcription.

The protein resides in the plastid. The protein localises to the chloroplast. It carries out the reaction RNA(n) + a ribonucleoside 5'-triphosphate = RNA(n+1) + diphosphate. Functionally, DNA-dependent RNA polymerase catalyzes the transcription of DNA into RNA using the four ribonucleoside triphosphates as substrates. This Emiliania huxleyi (Coccolithophore) protein is DNA-directed RNA polymerase subunit alpha.